The sequence spans 87 residues: MAVSVLRLTVVLGLLVLFLTCYADDKPDKPDDKPDDSGKDPKPDFPKFLSLLGTEIIENAVEFILRSMSRSTGFMEFDDNEGKHSSK.

The N-terminal stretch at 1–23 (MAVSVLRLTVVLGLLVLFLTCYA) is a signal peptide. The interval 24 to 44 (DDKPDKPDDKPDDSGKDPKPD) is disordered.

Its subcellular location is the secreted. This is an uncharacterized protein from Homo sapiens (Human).